We begin with the raw amino-acid sequence, 364 residues long: DNA replication and repair protein RecF (364 aa).

33 to 40 (GENGSGKT) serves as a coordination point for ATP.

Belongs to the RecF family.

It is found in the cytoplasm. Its function is as follows. The RecF protein is involved in DNA metabolism; it is required for DNA replication and normal SOS inducibility. RecF binds preferentially to single-stranded, linear DNA. It also seems to bind ATP. In Rickettsia felis (strain ATCC VR-1525 / URRWXCal2) (Rickettsia azadi), this protein is DNA replication and repair protein RecF.